The sequence spans 95 residues: Glutaredoxin 1 (95 aa).

The Glutaredoxin domain occupies 1-95 (MNKSILHTII…DKLLEHQPKN (95 aa)). Cys17 and Cys20 form a disulfide bridge.

It belongs to the glutaredoxin family. In terms of assembly, monomer.

Its subcellular location is the cytoplasm. Its function is as follows. Has a glutathione-disulfide oxidoreductase activity in the presence of NADPH and glutathione reductase. Reduces low molecular weight disulfides and proteins. The sequence is that of Glutaredoxin 1 (grxC1) from Rickettsia prowazekii (strain Madrid E).